A 393-amino-acid chain; its full sequence is Cysteine desulfurase (393 aa).

Residues 76–77 (GT), N155, Q183, and 203–205 (SAH) contribute to the pyridoxal 5'-phosphate site. K206 is modified (N6-(pyridoxal phosphate)lysine). Residue T241 participates in pyridoxal 5'-phosphate binding. C328 (cysteine persulfide intermediate) is an active-site residue. C328 lines the [2Fe-2S] cluster pocket.

The protein belongs to the class-V pyridoxal-phosphate-dependent aminotransferase family. NifS/IscS subfamily. Homodimer. Pyridoxal 5'-phosphate is required as a cofactor.

The catalysed reaction is (sulfur carrier)-H + L-cysteine = (sulfur carrier)-SH + L-alanine. Catalyzes the removal of elemental sulfur atoms from cysteine to produce alanine. Seems to participate in the biosynthesis of the nitrogenase metalloclusters by providing the inorganic sulfur required for the Fe-S core formation. The sequence is that of Cysteine desulfurase from Bradyrhizobium diazoefficiens (strain JCM 10833 / BCRC 13528 / IAM 13628 / NBRC 14792 / USDA 110).